A 77-amino-acid chain; its full sequence is Acyl carrier protein (77 aa).

The region spanning 2 to 77 (SNIEERVKKI…AAIDYVTANQ (76 aa)) is the Carrier domain. An O-(pantetheine 4'-phosphoryl)serine modification is found at Ser-37.

It belongs to the acyl carrier protein (ACP) family. In terms of processing, 4'-phosphopantetheine is transferred from CoA to a specific serine of apo-ACP by AcpS. This modification is essential for activity because fatty acids are bound in thioester linkage to the sulfhydryl of the prosthetic group.

It is found in the cytoplasm. Its pathway is lipid metabolism; fatty acid biosynthesis. Functionally, carrier of the growing fatty acid chain in fatty acid biosynthesis. The chain is Acyl carrier protein from Colwellia psychrerythraea (strain 34H / ATCC BAA-681) (Vibrio psychroerythus).